A 504-amino-acid chain; its full sequence is Multicopper oxidase MmcO (504 aa).

Residues 1–44 (MPELATSGNAFDKRRFSRRGFLGAGIASGFALAACASKPTASGA) constitute a signal peptide (tat-type signal). Residues His-120, His-122, His-161, and His-163 each coordinate Cu cation. Positions 190 to 349 (EWIIILDDWT…NALARALLST (160 aa)) constitute a Plastocyanin-like domain. Residues His-437, His-440, His-442, His-485, Cys-486, His-487, and His-491 each coordinate Cu cation.

This sequence belongs to the multicopper oxidase family. The cofactor is Cu cation. In terms of processing, predicted to be exported by the Tat system. The position of the signal peptide cleavage has not been experimentally proven.

It is found in the cell inner membrane. It localises to the periplasm. The catalysed reaction is 4 Fe(2+) + O2 + 4 H(+) = 4 Fe(3+) + 2 H2O. Required for copper resistance. In vitro, oxidizes organic substrates and Fe(2+). May act in vivo by oxidation of toxic periplasmic Cu(+). This is Multicopper oxidase MmcO from Mycobacterium tuberculosis (strain ATCC 25618 / H37Rv).